We begin with the raw amino-acid sequence, 308 residues long: D-alanine--D-alanine ligase (308 aa).

Residues 105 to 302 (KAIFRSLGLA…FPDLCERILD (198 aa)) enclose the ATP-grasp domain. Residue 133 to 188 (DLPFGLPCVVKPAGEGSSVGVHLVNEAAELGPACRDAASHAGDVIVERYVKGTEVD) coordinates ATP. Mg(2+) contacts are provided by aspartate 256, glutamate 269, and asparagine 271.

This sequence belongs to the D-alanine--D-alanine ligase family. Requires Mg(2+) as cofactor. It depends on Mn(2+) as a cofactor.

Its subcellular location is the cytoplasm. The enzyme catalyses 2 D-alanine + ATP = D-alanyl-D-alanine + ADP + phosphate + H(+). Its pathway is cell wall biogenesis; peptidoglycan biosynthesis. Cell wall formation. In Anaeromyxobacter dehalogenans (strain 2CP-1 / ATCC BAA-258), this protein is D-alanine--D-alanine ligase.